Reading from the N-terminus, the 488-residue chain is Bifunctional protein HldE (488 aa).

The ribokinase stretch occupies residues 1-330; sequence MIDFDGLSNA…RNILPPASLA (330 aa). 205 to 208 is a binding site for ATP; that stretch reads NSKE. Residue aspartate 275 is part of the active site. Residues 358-488 are cytidylyltransferase; that stretch reads FTNGCFDILH…TSLVKRAGGA (131 aa).

The protein in the N-terminal section; belongs to the carbohydrate kinase PfkB family. In the C-terminal section; belongs to the cytidylyltransferase family. Homodimer.

The catalysed reaction is D-glycero-beta-D-manno-heptose 7-phosphate + ATP = D-glycero-beta-D-manno-heptose 1,7-bisphosphate + ADP + H(+). It carries out the reaction D-glycero-beta-D-manno-heptose 1-phosphate + ATP + H(+) = ADP-D-glycero-beta-D-manno-heptose + diphosphate. It functions in the pathway nucleotide-sugar biosynthesis; ADP-L-glycero-beta-D-manno-heptose biosynthesis; ADP-L-glycero-beta-D-manno-heptose from D-glycero-beta-D-manno-heptose 7-phosphate: step 1/4. The protein operates within nucleotide-sugar biosynthesis; ADP-L-glycero-beta-D-manno-heptose biosynthesis; ADP-L-glycero-beta-D-manno-heptose from D-glycero-beta-D-manno-heptose 7-phosphate: step 3/4. Its function is as follows. Catalyzes the phosphorylation of D-glycero-D-manno-heptose 7-phosphate at the C-1 position to selectively form D-glycero-beta-D-manno-heptose-1,7-bisphosphate. In terms of biological role, catalyzes the ADP transfer from ATP to D-glycero-beta-D-manno-heptose 1-phosphate, yielding ADP-D-glycero-beta-D-manno-heptose. This is Bifunctional protein HldE from Nitrobacter winogradskyi (strain ATCC 25391 / DSM 10237 / CIP 104748 / NCIMB 11846 / Nb-255).